A 668-amino-acid chain; its full sequence is Bifunctional polymyxin resistance protein ArnA (668 aa).

The formyltransferase ArnAFT stretch occupies residues 1–307; that stretch reads MSAKTVVFAY…ELGLVDGSLL (307 aa). The Proton donor; for formyltransferase activity role is filled by His-106. (6R)-10-formyltetrahydrofolate-binding positions include Arg-116 and 138–142; that span reads VKRAD. The segment at 317 to 668 is dehydrogenase ArnADH; the sequence is RRTRVLILGV…IERPSNKEAC (352 aa). Residues Asp-350 and 371-372 contribute to the NAD(+) site; that span reads DI. Residues Ala-396, Tyr-401, and 435–436 each bind UDP-alpha-D-glucuronate; that span reads TS. Residue Glu-437 is the Proton acceptor; for decarboxylase activity of the active site. UDP-alpha-D-glucuronate is bound by residues Arg-463, Asn-494, 528–537, and Tyr-615; that span reads RLFDGGEQKR. Arg-621 functions as the Proton donor; for decarboxylase activity in the catalytic mechanism.

In the N-terminal section; belongs to the Fmt family. UDP-L-Ara4N formyltransferase subfamily. This sequence in the C-terminal section; belongs to the NAD(P)-dependent epimerase/dehydratase family. UDP-glucuronic acid decarboxylase subfamily. As to quaternary structure, homohexamer, formed by a dimer of trimers.

It carries out the reaction UDP-alpha-D-glucuronate + NAD(+) = UDP-beta-L-threo-pentopyranos-4-ulose + CO2 + NADH. The enzyme catalyses UDP-4-amino-4-deoxy-beta-L-arabinose + (6R)-10-formyltetrahydrofolate = UDP-4-deoxy-4-formamido-beta-L-arabinose + (6S)-5,6,7,8-tetrahydrofolate + H(+). It participates in nucleotide-sugar biosynthesis; UDP-4-deoxy-4-formamido-beta-L-arabinose biosynthesis; UDP-4-deoxy-4-formamido-beta-L-arabinose from UDP-alpha-D-glucuronate: step 1/3. The protein operates within nucleotide-sugar biosynthesis; UDP-4-deoxy-4-formamido-beta-L-arabinose biosynthesis; UDP-4-deoxy-4-formamido-beta-L-arabinose from UDP-alpha-D-glucuronate: step 3/3. Its pathway is bacterial outer membrane biogenesis; lipopolysaccharide biosynthesis. Functionally, bifunctional enzyme that catalyzes the oxidative decarboxylation of UDP-glucuronic acid (UDP-GlcUA) to UDP-4-keto-arabinose (UDP-Ara4O) and the addition of a formyl group to UDP-4-amino-4-deoxy-L-arabinose (UDP-L-Ara4N) to form UDP-L-4-formamido-arabinose (UDP-L-Ara4FN). The modified arabinose is attached to lipid A and is required for resistance to polymyxin and cationic antimicrobial peptides. The polypeptide is Bifunctional polymyxin resistance protein ArnA (Pseudomonas fluorescens (strain Pf0-1)).